A 209-amino-acid polypeptide reads, in one-letter code: Imidazole glycerol phosphate synthase subunit HisH (209 aa).

In terms of domain architecture, Glutamine amidotransferase type-1 spans 1–205 (MIAIIDYGMG…KGVVKQWKSS (205 aa)). The active-site Nucleophile is Cys79. Residues His180 and Glu182 contribute to the active site.

Heterodimer of HisH and HisF.

It localises to the cytoplasm. The catalysed reaction is 5-[(5-phospho-1-deoxy-D-ribulos-1-ylimino)methylamino]-1-(5-phospho-beta-D-ribosyl)imidazole-4-carboxamide + L-glutamine = D-erythro-1-(imidazol-4-yl)glycerol 3-phosphate + 5-amino-1-(5-phospho-beta-D-ribosyl)imidazole-4-carboxamide + L-glutamate + H(+). It catalyses the reaction L-glutamine + H2O = L-glutamate + NH4(+). The protein operates within amino-acid biosynthesis; L-histidine biosynthesis; L-histidine from 5-phospho-alpha-D-ribose 1-diphosphate: step 5/9. In terms of biological role, IGPS catalyzes the conversion of PRFAR and glutamine to IGP, AICAR and glutamate. The HisH subunit catalyzes the hydrolysis of glutamine to glutamate and ammonia as part of the synthesis of IGP and AICAR. The resulting ammonia molecule is channeled to the active site of HisF. This is Imidazole glycerol phosphate synthase subunit HisH from Bacillus cytotoxicus (strain DSM 22905 / CIP 110041 / 391-98 / NVH 391-98).